Consider the following 239-residue polypeptide: Ribosomal RNA small subunit methyltransferase G (239 aa).

Residues Gly78, Phe83, Ala129–Glu130, and Arg148 contribute to the S-adenosyl-L-methionine site.

Belongs to the methyltransferase superfamily. RNA methyltransferase RsmG family.

It is found in the cytoplasm. In terms of biological role, specifically methylates the N7 position of a guanine in 16S rRNA. The sequence is that of Ribosomal RNA small subunit methyltransferase G from Clostridium botulinum (strain Kyoto / Type A2).